Consider the following 461-residue polypeptide: L-cystine uptake protein TcyP (461 aa).

10 helical membrane passes run 1–21 (MTLF…LLYM), 33–53 (VFTA…IYGS), 72–92 (YVKL…LGAF), 104–124 (ISGL…AVGI), 183–203 (PTST…YLGV), 224–244 (IIMR…LAIM), 262–282 (FVIA…LLIT), 337–357 (LSIG…IMIA), 369–389 (FLFT…GVGG), and 393–413 (FAAL…GLLI).

This sequence belongs to the dicarboxylate/amino acid:cation symporter (DAACS) (TC 2.A.23) family.

Its subcellular location is the membrane. Functionally, mediates uptake of L-cystine, the oxidized form of L-cysteine. The protein is L-cystine uptake protein TcyP (tcyP) of Bacillus licheniformis (strain ATCC 14580 / DSM 13 / JCM 2505 / CCUG 7422 / NBRC 12200 / NCIMB 9375 / NCTC 10341 / NRRL NRS-1264 / Gibson 46).